A 96-amino-acid polypeptide reads, in one-letter code: Redox-responsive transcriptional regulator WhiB3 (96 aa).

One can recognise a 4Fe-4S Wbl-type domain in the interval 22-86 (LCRGVDSSMF…GGLSESEREL (65 aa)). Residues Cys-23, Cys-53, Cys-56, and Cys-62 each coordinate [4Fe-4S] cluster.

This sequence belongs to the WhiB family. The cofactor is [4Fe-4S] cluster. In terms of processing, the Fe-S cluster can be nitrosylated by nitric oxide (NO). Upon Fe-S cluster removal intramolecular disulfide bonds are formed.

It localises to the cytoplasm. A redox-sensitive transcriptional regulator. Maintains intracellular redox homeostasis by regulating catabolic metabolism and polyketide biosynthesis. Regulates expression of the redox buffer ergothioneine (ERG). In concert with myothiol (MSH), another redox buffer, responds to low pH leading to acid resistance. The apo- but not holo-form probably binds DNA. The protein is Redox-responsive transcriptional regulator WhiB3 (whiB3) of Mycolicibacterium smegmatis (strain ATCC 700084 / mc(2)155) (Mycobacterium smegmatis).